Here is a 189-residue protein sequence, read N- to C-terminus: Ornithine decarboxylase antizyme 2 (189 aa).

At Ser-186 the chain carries Phosphoserine.

The protein belongs to the ODC antizyme family. As to quaternary structure, interacts with ODC1 and thereby sterically blocks ODC homodimerization. Interacts with AZIN2; this interaction disrupts the interaction between the antizyme and ODC1.

It localises to the nucleus. Its function is as follows. Ornithine decarboxylase (ODC) antizyme protein that negatively regulates ODC activity and intracellular polyamine biosynthesis and uptake in response to increased intracellular polyamine levels. Binds to ODC monomers, inhibiting the assembly of the functional ODC homodimers. Does not target the ODC monomers for degradation, which allows a protein synthesis-independent restoration of ODC activity. Involved in the translocation of AZIN2 from ER-Golgi intermediate compartment (ERGIC) to the cytosol. The protein is Ornithine decarboxylase antizyme 2 (OAZ2) of Homo sapiens (Human).